Consider the following 155-residue polypeptide: Probable adenylyl-sulfate kinase (155 aa).

An ATP-binding site is contributed by 9–16; the sequence is GPSGAGKT. The active-site Phosphoserine intermediate is Ser83. The interval 134-155 is disordered; the sequence is LDGEYEEPENPEVVVDTDKNDR.

It belongs to the APS kinase family.

It carries out the reaction adenosine 5'-phosphosulfate + ATP = 3'-phosphoadenylyl sulfate + ADP + H(+). It participates in sulfur metabolism; hydrogen sulfide biosynthesis; sulfite from sulfate: step 2/3. Functionally, catalyzes the synthesis of activated sulfate. This chain is Probable adenylyl-sulfate kinase (cysC), found in Archaeoglobus fulgidus (strain ATCC 49558 / DSM 4304 / JCM 9628 / NBRC 100126 / VC-16).